The chain runs to 137 residues: Large ribosomal subunit protein uL16c (137 aa).

The protein belongs to the universal ribosomal protein uL16 family. Part of the 50S ribosomal subunit.

Its subcellular location is the plastid. It is found in the chloroplast. The polypeptide is Large ribosomal subunit protein uL16c (Vigna unguiculata (Cowpea)).